Here is a 279-residue protein sequence, read N- to C-terminus: 30 kDa ribonucleoprotein, chloroplastic (279 aa).

In terms of domain architecture, RRM 1 spans 87-165 (LKIFVGNLLF…RALRVNSGPP (79 aa)). A disordered region spans residues 156-187 (RALRVNSGPPPEKRENSSFRENSSFRGGSRGG). Positions 166–193 (PEKRENSSFRENSSFRGGSRGGGSFDSS) are linker (Gly-rich). Residues 194–272 (NRVYVGNLAW…RAIRVSPAEA (79 aa)) form the RRM 2 domain.

As to expression, expressed at high levels in the leaves and seedlings, and lower levels are seen in the stems and roots.

Its subcellular location is the plastid. It is found in the chloroplast. Functionally, could be involved in splicing and/or processing of chloroplast RNA's. This Nicotiana plumbaginifolia (Leadwort-leaved tobacco) protein is 30 kDa ribonucleoprotein, chloroplastic.